The chain runs to 345 residues: Neuropeptide receptor 15 (345 aa).

The Extracellular portion of the chain corresponds to 1–11 (MSVAVGIPYVC). Residues 12–32 (FFIILSVVGIIGNVIVIYAIA) traverse the membrane as a helical segment. Over 33 to 40 (GDRNMRKS) the chain is Cytoplasmic. The chain crosses the membrane as a helical span at residues 41–61 (VMNILLLNLAVADLANLIFTI). Over 62–90 (PEWIPPVFFGSTDWLFPSFLCPVCRYLEC) the chain is Extracellular. Residues Cys-82 and Cys-171 are joined by a disulfide bond. The chain crosses the membrane as a helical span at residues 91-111 (VFLFASISTQMIVCIERYIAI). Residues 112–125 (VLPMQARQLCSRRN) are Cytoplasmic-facing. A helical transmembrane segment spans residues 126-146 (VLITVLVDWIFVACFASPYAV). At 147 to 187 (WHSVKTKDRNTNSLRFKLFQLSATCSNTVGKSTWWQGYKLT) the chain is on the extracellular side. The chain crosses the membrane as a helical span at residues 188-208 (EFLAFYFVPCFIITVVYTKVA). At 209 to 246 (KCLWCKDPTLQCETRSCLDNKSSSRSSDALRTRRNVVK) the chain is on the cytoplasmic side. A helical transmembrane segment spans residues 247 to 267 (MLIACVAVYFVCYSPIQVIFL). Topologically, residues 268–281 (SKAVLNVTIHPPYD) are extracellular. Residues 282–304 (FILLMNALAMTCSASNPLLYTLF) form a helical membrane-spanning segment. Over 305-345 (SQKFRRRLRDVLYCPSDVENETKTYYSINNTSIVGPRASFN) the chain is Cytoplasmic.

The protein belongs to the G-protein coupled receptor 1 family. As to expression, expressed in pharyngeal muscle and AWC, ASG, ASE, ASI, and ASJ sensory neurons. Expressed in ASI neuron. Expressed in AFD neurons and in AVK interneuron.

The protein resides in the cell membrane. Functionally, probable receptor for neuropeptide ligand nlp-8 that plays a role in octopamine signaling and specifically, the octopamine inhibition of aversion responses in olfactory sensory neurons. Plays a crucial role in daf-7 expression. Acts in concert with gpa-4 to activate TGF-beta-like daf-7 secretion in the ASI neuron, thereby promoting larval development and inhibition of dauer diapause. Suppresses immune response against pathogenic infection by inhibiting transcription regulators elt-2 and hlh-30 in ASJ neuron. Promotes pathogen avoidance behavior via intestinal gon-2, independent of aerotaxis. The protein is Neuropeptide receptor 15 (npr-15) of Caenorhabditis elegans.